The sequence spans 432 residues: Tol-Pal system protein TolB (432 aa).

Positions 1–22 are cleaved as a signal peptide; the sequence is MMFKKCLSVLFTCLIFISSARA.

This sequence belongs to the TolB family. The Tol-Pal system is composed of five core proteins: the inner membrane proteins TolA, TolQ and TolR, the periplasmic protein TolB and the outer membrane protein Pal. They form a network linking the inner and outer membranes and the peptidoglycan layer.

The protein resides in the periplasm. Part of the Tol-Pal system, which plays a role in outer membrane invagination during cell division and is important for maintaining outer membrane integrity. The protein is Tol-Pal system protein TolB of Marinomonas sp. (strain MWYL1).